The sequence spans 709 residues: ATP-binding cassette sub-family F member 3 (709 aa).

Alanine 2 carries the post-translational modification N-acetylalanine. The span at 129–143 shows a compositional bias: basic and acidic residues; it reads RLKAKQEKRSEKETL. The segment at 129–171 is disordered; sequence RLKAKQEKRSEKETLKTSSPLVLEEASASQAGSRKESRLESSG. A phosphoserine mark is found at serine 155, serine 157, and serine 161. Residues 161 to 171 show a composition bias toward basic and acidic residues; sequence SRKESRLESSG. ABC transporter domains follow at residues 178–424 and 492–707; these read VRIE…LNQQ and LQLD…RREG. 210 to 217 provides a ligand contact to ATP; it reads GRNGLGKT. Phosphoserine is present on serine 283. 525–532 is a binding site for ATP; sequence GENGAGKS.

Belongs to the ABC transporter superfamily. ABCF family. EF3 subfamily.

Its function is as follows. Displays an antiviral effect against flaviviruses such as west Nile virus (WNV) in the presence of OAS1B. In Rattus norvegicus (Rat), this protein is ATP-binding cassette sub-family F member 3 (Abcf3).